Here is a 377-residue protein sequence, read N- to C-terminus: Succinyl-diaminopimelate desuccinylase (377 aa).

Histidine 66 provides a ligand contact to Zn(2+). The active site involves aspartate 68. Residue aspartate 99 participates in Zn(2+) binding. Glutamate 133 functions as the Proton acceptor in the catalytic mechanism. Zn(2+)-binding residues include glutamate 134, glutamate 162, and histidine 348.

This sequence belongs to the peptidase M20A family. DapE subfamily. Homodimer. Zn(2+) is required as a cofactor. Requires Co(2+) as cofactor.

The catalysed reaction is N-succinyl-(2S,6S)-2,6-diaminopimelate + H2O = (2S,6S)-2,6-diaminopimelate + succinate. The protein operates within amino-acid biosynthesis; L-lysine biosynthesis via DAP pathway; LL-2,6-diaminopimelate from (S)-tetrahydrodipicolinate (succinylase route): step 3/3. Catalyzes the hydrolysis of N-succinyl-L,L-diaminopimelic acid (SDAP), forming succinate and LL-2,6-diaminopimelate (DAP), an intermediate involved in the bacterial biosynthesis of lysine and meso-diaminopimelic acid, an essential component of bacterial cell walls. The chain is Succinyl-diaminopimelate desuccinylase from Xylella fastidiosa (strain M23).